The chain runs to 319 residues: Phosphoenolpyruvate transferase (319 aa).

Asp-50 contributes to the 7,8-didemethyl-8-hydroxy-5-deazariboflavin binding site.

The protein belongs to the CofD family. Homodimer. It depends on Mg(2+) as a cofactor.

It catalyses the reaction enolpyruvoyl-2-diphospho-5'-guanosine + 7,8-didemethyl-8-hydroxy-5-deazariboflavin = dehydro coenzyme F420-0 + GMP + H(+). Its pathway is cofactor biosynthesis; coenzyme F420 biosynthesis. Its function is as follows. Catalyzes the transfer of the phosphoenolpyruvate moiety from enoylpyruvoyl-2-diphospho-5'-guanosine (EPPG) to 7,8-didemethyl-8-hydroxy-5-deazariboflavin (FO) with the formation of dehydro coenzyme F420-0 and GMP. The protein is Phosphoenolpyruvate transferase of Streptomyces coelicolor (strain ATCC BAA-471 / A3(2) / M145).